Consider the following 408-residue polypeptide: tRNA-specific 2-thiouridylase MnmA (408 aa).

ATP contacts are provided by residues G38–S45 and M64. The interaction with target base in tRNA stretch occupies residues N124–D126. The active-site Nucleophile is C129. Cysteines 129 and 231 form a disulfide. G153 is an ATP binding site. The segment at K181–Q183 is interaction with tRNA. Residue C231 is the Cysteine persulfide intermediate of the active site. The interaction with tRNA stretch occupies residues R348 to Y349.

This sequence belongs to the MnmA/TRMU family.

The protein localises to the cytoplasm. It carries out the reaction S-sulfanyl-L-cysteinyl-[protein] + uridine(34) in tRNA + AH2 + ATP = 2-thiouridine(34) in tRNA + L-cysteinyl-[protein] + A + AMP + diphosphate + H(+). In terms of biological role, catalyzes the 2-thiolation of uridine at the wobble position (U34) of tRNA, leading to the formation of s(2)U34. The chain is tRNA-specific 2-thiouridylase MnmA from Psychrobacter arcticus (strain DSM 17307 / VKM B-2377 / 273-4).